We begin with the raw amino-acid sequence, 259 residues long: AM-toxin biosynthesis protein 11 (259 aa).

The tract at residues 39–66 (RRSRRRPEEESIQSLSKHVSTTTQPCPT) is disordered. A compositionally biased stretch (polar residues) spans 50–64 (IQSLSKHVSTTTQPC).

Its pathway is mycotoxin biosynthesis. Part of the gene clusters that mediate the biosynthesis of AM-toxins, host-selective toxins (HSTs) causing Alternaria blotch on apple, a worldwide distributed disease. AM-toxins are cyclic depsipeptides containing the 3 residues 2-hydroxy-isovaleric acid (2-HIV), dehydroalanine, L-alanine which are common for all 3 AM-toxins I to III. The fourth precursor is L-alpha-amino-methoxyphenyl-valeric acid (L-Amv) for AM-toxin I, L-alpha-amino-phenyl-valeric acid (L-Apv) for AM-toxin II, and L-alpha-amino-hydroxyphenyl-valeric acid (L-Ahv) for AM-toxin III. AM-toxins have two target sites for affecting susceptible apple cells; they cause invagination of the plasma membrane and electrolyte loss and chloroplast disorganization. The non-ribosomal peptide synthetase AMT1 contains 4 catalytic modules and is responsible for activation of each residue in AM-toxin. The aldo-keto reductase AMT2 catalyzes the conversion of 2-keto-isovaleric acid (2-KIV) to 2-hydroxy-isovaleric acid (2-HIV), one of the precursor residues incorporated by AMT1 during AM-toxin biosynthesis, by reduction of its ketone to an alcohol. The cytochrome P450 monooxygenase AMT3 and the thioesterase AMT4 are also important for AM-toxin production, but their exact function within the AM-toxin biosynthesis are not known yet. Up to 21 proteins (including AMT1 to AMT4) are predicted to be involved in AM-toxin biosynthesis since their expression ishighly up-regulated in AM-toxin-producing cultures. This chain is AM-toxin biosynthesis protein 11, found in Alternaria alternata (Alternaria rot fungus).